Reading from the N-terminus, the 319-residue chain is Ribonuclease Z (319 aa).

Zn(2+) is bound by residues H62, H64, D66, H67, H139, D209, and H268. Residue D66 is the Proton acceptor of the active site.

It belongs to the RNase Z family. In terms of assembly, homodimer. It depends on Zn(2+) as a cofactor.

It carries out the reaction Endonucleolytic cleavage of RNA, removing extra 3' nucleotides from tRNA precursor, generating 3' termini of tRNAs. A 3'-hydroxy group is left at the tRNA terminus and a 5'-phosphoryl group is left at the trailer molecule.. In terms of biological role, zinc phosphodiesterase, which displays some tRNA 3'-processing endonuclease activity. Probably involved in tRNA maturation, by removing a 3'-trailer from precursor tRNA. The polypeptide is Ribonuclease Z (Pseudomonas putida (strain ATCC 47054 / DSM 6125 / CFBP 8728 / NCIMB 11950 / KT2440)).